The sequence spans 137 residues: Proofreading thioesterase EntH (137 aa).

The active-site Nucleophile or proton acceptor is E63.

It belongs to the thioesterase PaaI family. Homotetramer. Dimer of dimers. Interacts specifically with the aryl carrier protein (ArCP) domain of EntB.

The protein localises to the cytoplasm. It participates in siderophore biosynthesis; enterobactin biosynthesis. Functionally, required for optimal enterobactin synthesis. Acts as a proofreading enzyme that prevents EntB misacylation by hydrolyzing the thioester bound existing between EntB and wrongly charged molecules. The sequence is that of Proofreading thioesterase EntH from Salmonella typhimurium (strain LT2 / SGSC1412 / ATCC 700720).